The primary structure comprises 408 residues: Aminopeptidase T (408 aa).

Positions 250, 316, 340, 345, 376, and 378 each coordinate a divalent metal cation.

Belongs to the peptidase M29 family. Homodimer. Co(2+) is required as a cofactor. Requires Zn(2+) as cofactor. Mg(2+) serves as cofactor.

Metal-dependent exopeptidase. This chain is Aminopeptidase T, found in Thermus aquaticus.